A 438-amino-acid chain; its full sequence is UDP-N-acetylmuramoylalanine--D-glutamate ligase (438 aa).

ATP is bound at residue 112–118 (GSNGKST).

This sequence belongs to the MurCDEF family.

The protein localises to the cytoplasm. The catalysed reaction is UDP-N-acetyl-alpha-D-muramoyl-L-alanine + D-glutamate + ATP = UDP-N-acetyl-alpha-D-muramoyl-L-alanyl-D-glutamate + ADP + phosphate + H(+). It participates in cell wall biogenesis; peptidoglycan biosynthesis. Functionally, cell wall formation. Catalyzes the addition of glutamate to the nucleotide precursor UDP-N-acetylmuramoyl-L-alanine (UMA). The chain is UDP-N-acetylmuramoylalanine--D-glutamate ligase from Salmonella typhimurium (strain LT2 / SGSC1412 / ATCC 700720).